Here is a 278-residue protein sequence, read N- to C-terminus: MDVRQSIHSEHAKTLDTQALRREFLIENIFVADEYTMFYSHIDRIIVGGIMPVSHSVEIGGEVGKQLGVSRLLDRRELGVINIGGAGAIIVDGQRHDIGHRDALYIGKGAKELVFVSNEASRPAKFYYNCAPAHTAYPTKKVSPADVAPVTLGDNLTSNRRTINKYFVPDVLETCQLSMGLTELAPGNLWNTMPCHTHERRMEVYLYFNMEEDSCVFHMMGQPQETRHIVMRNEQAVISPSWSIHSGVGTKAYTFIWGMVGENQVFDDMDHVAVQDLR.

Zn(2+) is bound by residues His196, His198, Glu203, and His245.

This sequence belongs to the KduI family. Zn(2+) is required as a cofactor.

The enzyme catalyses 5-dehydro-4-deoxy-D-glucuronate = 3-deoxy-D-glycero-2,5-hexodiulosonate. It functions in the pathway glycan metabolism; pectin degradation; 2-dehydro-3-deoxy-D-gluconate from pectin: step 4/5. In terms of biological role, catalyzes the isomerization of 5-dehydro-4-deoxy-D-glucuronate to 3-deoxy-D-glycero-2,5-hexodiulosonate. The chain is 4-deoxy-L-threo-5-hexosulose-uronate ketol-isomerase from Salmonella choleraesuis (strain SC-B67).